A 318-amino-acid polypeptide reads, in one-letter code: MANEMEFEKPILELKSKIADLKEYNETSDVDLTNEIEKLEKRLGKLESSIYSNMTAWDKFQVARHPERPTTLDYISLLFEDFMELHGDRAFGDDAAIVGGIATFKGVPVTVIGHQRGKDTKDNLHRNFGMPHPEGFRKALRLMKQADKFGRPIICFIDTKGAYPGRAAEERGQSEAIARNLYEMSDMKVPIISIVIGEGGSGGALALGVGNQIFMLENAVFSVISPEGAAAILWKDASQAKKAAESMRITAGDLFELGITDGIIPEVKGGAHRDLNAQAEEINKTITKSLHALMAFSEEQLIEQRYEKFKKIGVYDTL.

Positions 31-292 (DLTNEIEKLE…NKTITKSLHA (262 aa)) constitute a CoA carboxyltransferase C-terminal domain.

Belongs to the AccA family. In terms of assembly, acetyl-CoA carboxylase is a heterohexamer composed of biotin carboxyl carrier protein (AccB), biotin carboxylase (AccC) and two subunits each of ACCase subunit alpha (AccA) and ACCase subunit beta (AccD).

It is found in the cytoplasm. The catalysed reaction is N(6)-carboxybiotinyl-L-lysyl-[protein] + acetyl-CoA = N(6)-biotinyl-L-lysyl-[protein] + malonyl-CoA. It participates in lipid metabolism; malonyl-CoA biosynthesis; malonyl-CoA from acetyl-CoA: step 1/1. Functionally, component of the acetyl coenzyme A carboxylase (ACC) complex. First, biotin carboxylase catalyzes the carboxylation of biotin on its carrier protein (BCCP) and then the CO(2) group is transferred by the carboxyltransferase to acetyl-CoA to form malonyl-CoA. The polypeptide is Acetyl-coenzyme A carboxylase carboxyl transferase subunit alpha (Listeria monocytogenes serotype 4a (strain HCC23)).